Reading from the N-terminus, the 622-residue chain is Glutamyl-tRNA(Gln) amidotransferase subunit E (622 aa).

It belongs to the GatB/GatE family. GatE subfamily. Heterodimer of GatD and GatE.

It carries out the reaction L-glutamyl-tRNA(Gln) + L-glutamine + ATP + H2O = L-glutaminyl-tRNA(Gln) + L-glutamate + ADP + phosphate + H(+). Allows the formation of correctly charged Gln-tRNA(Gln) through the transamidation of misacylated Glu-tRNA(Gln) in organisms which lack glutaminyl-tRNA synthetase. The reaction takes place in the presence of glutamine and ATP through an activated gamma-phospho-Glu-tRNA(Gln). The GatDE system is specific for glutamate and does not act on aspartate. This chain is Glutamyl-tRNA(Gln) amidotransferase subunit E, found in Halobacterium salinarum (strain ATCC 29341 / DSM 671 / R1).